The primary structure comprises 119 residues: Large ribosomal subunit protein uL18 (119 aa).

Belongs to the universal ribosomal protein uL18 family. As to quaternary structure, part of the 50S ribosomal subunit; part of the 5S rRNA/L5/L18/L25 subcomplex. Contacts the 5S and 23S rRNAs.

This is one of the proteins that bind and probably mediate the attachment of the 5S RNA into the large ribosomal subunit, where it forms part of the central protuberance. The chain is Large ribosomal subunit protein uL18 from Nitratidesulfovibrio vulgaris (strain DP4) (Desulfovibrio vulgaris).